A 517-amino-acid polypeptide reads, in one-letter code: Tyrosine 3-monooxygenase (517 aa).

Ser-33 is modified (phosphoserine; by PKA). 3 residues coordinate Fe cation: His-345, His-350, and Glu-390.

This sequence belongs to the biopterin-dependent aromatic amino acid hydroxylase family. Fe(2+) is required as a cofactor.

The protein resides in the cytoplasm. Its subcellular location is the perinuclear region. The protein localises to the cell projection. It is found in the axon. The enzyme catalyses (6R)-L-erythro-5,6,7,8-tetrahydrobiopterin + L-tyrosine + O2 = (4aS,6R)-4a-hydroxy-L-erythro-5,6,7,8-tetrahydrobiopterin + L-dopa. It functions in the pathway catecholamine biosynthesis; dopamine biosynthesis; dopamine from L-tyrosine: step 1/2. With respect to regulation, phosphorylation leads to an increase in the catalytic activity. Its function is as follows. Involved in the synthesis of catecholamines, such as dopamine. Has a role in serotonin signaling. Required for normal explorative and foraging behavior. The sequence is that of Tyrosine 3-monooxygenase (cat-2) from Caenorhabditis briggsae.